A 467-amino-acid chain; its full sequence is Probable Xaa-Pro aminopeptidase pepP (467 aa).

Positions 264, 275, 398, and 438 each coordinate Mn(2+).

It belongs to the peptidase M24B family. It depends on Mn(2+) as a cofactor.

The catalysed reaction is Release of any N-terminal amino acid, including proline, that is linked to proline, even from a dipeptide or tripeptide.. In terms of biological role, catalyzes the removal of a penultimate prolyl residue from the N-termini of peptides. This is Probable Xaa-Pro aminopeptidase pepP (pepP) from Neosartorya fischeri (strain ATCC 1020 / DSM 3700 / CBS 544.65 / FGSC A1164 / JCM 1740 / NRRL 181 / WB 181) (Aspergillus fischerianus).